A 553-amino-acid polypeptide reads, in one-letter code: Vacuolar fusion protein MON1 homolog B (553 aa).

Met-1 carries the N-acetylmethionine modification. Disordered regions lie at residues 1-111 and 534-553; these read MEAG…DEDW and STPP…FTGL. Over residues 23–35 the composition is skewed to basic and acidic residues; that stretch reads FPREEAGDSERVH. Over residues 52–72 the composition is skewed to polar residues; that stretch reads KDQPSSLLSPLPQTEAASSTC. Ser-57 bears the Phosphoserine mark. Positions 78–95 are enriched in low complexity; the sequence is AAASDSSPPGEPESNSEG. Residues 96 to 108 show a composition bias toward acidic residues; it reads QGEDPDDGGDPSD. Residues 541-553 show a composition bias toward polar residues; the sequence is ADQAPNNGLFTGL.

Belongs to the MON1/SAND family. In terms of assembly, interacts with CCNT2; down-regulates CCNT2-mediated activation of viral promoters during herpes simplex virus 1/HHV-1 infection. Found in a complex with RMC1, CCZ1 MON1A and MON1B.

The polypeptide is Vacuolar fusion protein MON1 homolog B (Mon1b) (Mus musculus (Mouse)).